A 379-amino-acid polypeptide reads, in one-letter code: Transaminase htyB (379 aa).

Position 92 (R92) interacts with pyridoxal 5'-phosphate. Position 203 is an N6-(pyridoxal phosphate)lysine (K203). E239 contacts pyridoxal 5'-phosphate.

Belongs to the class-IV pyridoxal-phosphate-dependent aminotransferase family. Pyridoxal 5'-phosphate is required as a cofactor.

It functions in the pathway antifungal biosynthesis. Transaminase; part of the gene cluster that mediates the de novo generation of L-homotyrosine from acetyl-CoA and 4-hydroxyphenyl-pyruvate. L-homotyrosine is a building block of echinocandin B, a fungal lipidated cyclic hexapeptide that acts as an antifungal agent. L-homotyrosine 4-hydroxyphenyl-pyruvate first undergoes an aldol-type condensation by htyA with the C-2 of acetyl-CoA followed by the release of CoA to form 2-(4-hydroxybenzyl)-malate. This is followed by isomerization of 2-(4-hydroxy-benzyl)-malate to 3-(4-hydroxybenzyl)-malate by htyD. Thereafter, 3-(4-hydroxybenzyl)-malate undergoes decarboxylation and oxidation to form 2-oxo-4-(4-hydroxybenzyl)butanoic acid, coupled to reduction of NAD(+) to NADH by htyC. The product then undergoes transamination catalyzed by htyB to form L-homotyrosine. In Aspergillus rugulosus (Emericella rugulosa), this protein is Transaminase htyB.